The chain runs to 485 residues: 28S rRNA (uridine-N(3))-methyltransferase (485 aa).

Arg-296, Gly-318, and Asn-347 together coordinate S-adenosyl-L-methionine.

This sequence belongs to the class IV-like SAM-binding methyltransferase superfamily.

It localises to the nucleus. It catalyses the reaction uridine in 28S rRNA + S-adenosyl-L-methionine = N(3)-methyluridine in 28S rRNA + S-adenosyl-L-homocysteine + H(+). S-adenosyl-L-methionine-dependent methyltransferase that specifically methylates the uridine in position 3485 of 28S rRNA. In Drosophila melanogaster (Fruit fly), this protein is 28S rRNA (uridine-N(3))-methyltransferase.